We begin with the raw amino-acid sequence, 419 residues long: MDISAYQHMNIRMSTRGKRPLRNLTPNDKVRAIQRIHNGETKASVSRDIGVPESTLRGWCKNEQKLRFMCRQLGPDHLGLDTPPEKRAKFELQLQLPPKFVALPPNYEELGFGALPYSPADYPVQNESLLEKLSLVEFVKKNGGLHPEGALHPGQAGVMDYSNNMLHQLNLLALLNSKLTPQTADVLVDAQPKSEDNKVIDSPAASEDYSKNNYPLLSVKNWAKDPAKRVNSANQPEQVNDKNNNALEANSSAPQALVTEQAKTPMFSDTTMPLLPAPFPNPADLAPVIAPVTPANAPPTGTDNQGAALLDWCKLFNASLNFLAFAAAAASMQPGGGGPGGPSYNPNQMASGGSEPDLETYPFNEALLKRLSPLAHSEASNESYCDSEPEDLSVRSCASKASSRSHTPDKSVGSSDAEQ.

The HTH psq-type domain maps to 15 to 66 (TRGKRPLRNLTPNDKVRAIQRIHNGETKASVSRDIGVPESTLRGWCKNEQKL). Positions 42–62 (KASVSRDIGVPESTLRGWCKN) form a DNA-binding region, H-T-H motif. Disordered stretches follow at residues 333–359 (QPGG…PDLE) and 378–419 (EASN…DAEQ).

As to quaternary structure, interacts with itself, dan, ey and dac to form a complex (or complexes) containing the RD factors. Coexpressed with dan in the presumptive distal antenna, but not in the leg imaginal disk. Both proteins are also expressed in the brain and the eye region of the eye-antenna disk. First detected in early L3 eye disks in cells surrounding the newly initiated morphogenetic furrow. Highly expressed in evenly spaced clusters of cells anterior to the furrow, lower levels within and posterior to the furrow.

It localises to the nucleus. Probable transcription factor with a role in the retinal determination (RD) network. Regulates ato expression and is required for normal R8 induction and differentiation. Danr appears to repress Dan expression, but Dan is required for Danr expression anterior to the morphogenetic furrow (MF). Dan and Danr lie downstream of so and require dac function for highest levels of expression. Contributes to differentiation of antenna-specific characteristics; effector gene that acts downstream of homothorax (hth), Distal-less (Dll), cut (ct) and spineless (ss) genes to control differentiation of distal antennal structures. The protein is Protein distal antenna-related of Drosophila melanogaster (Fruit fly).